We begin with the raw amino-acid sequence, 128 residues long: DNA-directed RNA polymerase subunit omega (128 aa).

Residues 87–106 (ARSSQAAPKSAPGQEIGKSF) form a disordered region.

Belongs to the RNA polymerase subunit omega family. As to quaternary structure, the RNAP catalytic core consists of 2 alpha, 1 beta, 1 beta' and 1 omega subunit. When a sigma factor is associated with the core the holoenzyme is formed, which can initiate transcription.

The enzyme catalyses RNA(n) + a ribonucleoside 5'-triphosphate = RNA(n+1) + diphosphate. Functionally, promotes RNA polymerase assembly. Latches the N- and C-terminal regions of the beta' subunit thereby facilitating its interaction with the beta and alpha subunits. The polypeptide is DNA-directed RNA polymerase subunit omega (Anaplasma marginale (strain St. Maries)).